A 361-amino-acid chain; its full sequence is Probable purine permease 13 (361 aa).

10 consecutive transmembrane segments (helical) span residues 35 to 55, 68 to 88, 103 to 123, 129 to 151, 156 to 176, 192 to 212, 238 to 258, 268 to 288, 289 to 309, and 323 to 343; these read WILVFISIFFLISAQAIAVLL, WISTLVQTCGFPILYLPLCFL, LVWIYLSLGFAIGLDNLLYSF, SASTYSILCSSQLAFNGVFSYYI, ITCLILFSVLFLSVSAVLVSL, LIGCLCTVFASLIYSLQLSLM, VASCVAVIGLFASGEWMLLSV, VIYVLTLVGTAVSWQLGSVGA, VALIFLVSSLFSNLIGTLSLI, and LTEVKMVAMLIAFMGFGFYIY.

This sequence belongs to the purine permeases (TC 2.A.7.14) family.

It is found in the membrane. In Arabidopsis thaliana (Mouse-ear cress), this protein is Probable purine permease 13 (PUP13).